The primary structure comprises 610 residues: UvrABC system protein C (610 aa).

In terms of domain architecture, GIY-YIG spans 16 to 94 (SQPGVYRMYD…IKLYQPRYNV (79 aa)). Residues 204-239 (DQVLTQLISRMETASQNLEFEEAARIRDQIQAVRRV) form the UVR domain.

The protein belongs to the UvrC family. Interacts with UvrB in an incision complex.

Its subcellular location is the cytoplasm. Functionally, the UvrABC repair system catalyzes the recognition and processing of DNA lesions. UvrC both incises the 5' and 3' sides of the lesion. The N-terminal half is responsible for the 3' incision and the C-terminal half is responsible for the 5' incision. In Shigella boydii serotype 18 (strain CDC 3083-94 / BS512), this protein is UvrABC system protein C.